Consider the following 152-residue polypeptide: Immunity protein YobK (152 aa).

In terms of assembly, interacts with cognate toxin YobL but not with non-cognate putative toxin YeeF. The interaction inhibits the toxic activity of YobL.

The protein resides in the cytoplasm. In terms of biological role, immunity component of one of 6 LXG toxin-immunity modules in this strain. They promote kin selection, mediate competition in biofilms, and drive spatial segregation of different strains, indicating that LXG toxins may help avoid warfare between strains in biofilms. Mediates intercellular competition during biofilm formation; disruption of the operon disadvantages the bacteria, but overexpression of the cognate immunity protein restores growth in competition with wild-type. In situ neutralizes the toxic effect of cognate toxin YobL. Neutralizes the toxic activity of cognate toxin YobL upon expression in E.coli. Does not have immunity protein activity on other LXG toxins. The sequence is that of Immunity protein YobK (yobK) from Bacillus subtilis (strain 168).